We begin with the raw amino-acid sequence, 25 residues long: C-reactive protein P2 subunit 4 (25 aa).

The 25-residue stretch at 1 to 25 (GRSLVFPEETANSFVELFPAKELSL) folds into the Pentraxin (PTX) domain.

Belongs to the pentraxin family. As to quaternary structure, heteropentamer. Discoid arrangement of 5 non-covalently bound subunits 1, 2, 3 and 4. Ca(2+) serves as cofactor. In terms of processing, glycosylated.

It localises to the secreted. Functionally, displays several functions associated with host defense: it promotes agglutination, bacterial capsular swelling, phagocytosis, and complement fixation through its calcium-dependent binding to phosphorylcholine. This Gadus morhua (Atlantic cod) protein is C-reactive protein P2 subunit 4.